Reading from the N-terminus, the 60-residue chain is MAVPKRKKSKSRRNMHRSHHAIKPKNIVVCTTTGEFMLPHSIAVDGSYKGKRVFIKQQAE.

A disordered region spans residues 1 to 23; sequence MAVPKRKKSKSRRNMHRSHHAIK.

The protein belongs to the bacterial ribosomal protein bL32 family.

In Wolbachia sp. subsp. Brugia malayi (strain TRS), this protein is Large ribosomal subunit protein bL32.